Here is a 100-residue protein sequence, read N- to C-terminus: Large ribosomal subunit protein bL28 (100 aa).

This sequence belongs to the bacterial ribosomal protein bL28 family.

The sequence is that of Large ribosomal subunit protein bL28 from Methylobacterium radiotolerans (strain ATCC 27329 / DSM 1819 / JCM 2831 / NBRC 15690 / NCIMB 10815 / 0-1).